The sequence spans 26 residues: Protein YsdD (26 aa).

Residues Met1–Val26 are disordered.

The polypeptide is Protein YsdD (Escherichia coli (strain K12)).